A 175-amino-acid chain; its full sequence is Peptide deformylase (175 aa).

Fe cation is bound by residues Cys92 and His134. Glu135 is an active-site residue. His138 contributes to the Fe cation binding site.

It belongs to the polypeptide deformylase family. Fe(2+) is required as a cofactor.

It carries out the reaction N-terminal N-formyl-L-methionyl-[peptide] + H2O = N-terminal L-methionyl-[peptide] + formate. In terms of biological role, removes the formyl group from the N-terminal Met of newly synthesized proteins. Requires at least a dipeptide for an efficient rate of reaction. N-terminal L-methionine is a prerequisite for activity but the enzyme has broad specificity at other positions. This Blochmanniella floridana protein is Peptide deformylase.